The primary structure comprises 121 residues: Ragulator complex protein LAMTOR4 homolog (121 aa).

Residues 91–121 form a disordered region; sequence TQNGATTSSSSSTSYNDAAEGNNISSSTVLA. A compositionally biased stretch (polar residues) spans 112 to 121; the sequence is NNISSSTVLA.

The protein belongs to the LAMTOR4 family. Part of the Ragulator complex.

Its subcellular location is the lysosome. Its function is as follows. Regulator of the TOR pathway, a signaling cascade that promotes cell growth in response to growth factors, energy levels, and amino acids. As part of the Ragulator complex, may activate the TOR signaling cascade in response to amino acids. This is Ragulator complex protein LAMTOR4 homolog from Drosophila pseudoobscura pseudoobscura (Fruit fly).